Consider the following 222-residue polypeptide: PKHD-type hydroxylase Syncc9902_2001 (222 aa).

In terms of domain architecture, Fe2OG dioxygenase spans 80–174; sequence RVHSILISRS…RLVCVGWIES (95 aa). Fe cation-binding residues include histidine 98, aspartate 100, and histidine 155. Arginine 165 provides a ligand contact to 2-oxoglutarate.

The cofactor is Fe(2+). It depends on L-ascorbate as a cofactor.

In Synechococcus sp. (strain CC9902), this protein is PKHD-type hydroxylase Syncc9902_2001.